A 511-amino-acid chain; its full sequence is Sodium/hydrogen exchanger 9B1 (511 aa).

Basic and acidic residues predominate over residues 1–10; sequence MHTTESKDEH. The disordered stretch occupies residues 1–41; the sequence is MHTTESKDEHLEDENFQTSTTPQSLIDPNSTAHEETKTVIS. Over residues 16–31 the composition is skewed to polar residues; that stretch reads FQTSTTPQSLIDPNST. Transmembrane regions (helical) follow at residues 67–87, 95–115, 116–136, 152–172, 187–207, 215–235, 260–280, 284–304, 337–357, 368–388, 398–418, 431–451, and 472–492; these read IITN…VLGS, LFGL…LQLI, RIPL…GFTI, WSSI…GLGL, LAVG…HFIM, FLLG…SMMV, VLAI…GGIV, IASI…GFFV, IGLH…AGTK, IITN…GAEV, IGIF…VTYI, IFIA…GPLV, and VAFL…GILG.

The protein belongs to the monovalent cation:proton antiporter 1 (CPA1) transporter (TC 2.A.36) family.

Its subcellular location is the cell projection. It localises to the cilium. It is found in the flagellum membrane. In terms of biological role, sperm-specific Na(+)/H(+) exchanger involved in intracellular pH regulation of spermatozoa. Involved in sperm motility and fertility. This Macaca fascicularis (Crab-eating macaque) protein is Sodium/hydrogen exchanger 9B1 (SLC9B1).